We begin with the raw amino-acid sequence, 199 residues long: Chaperone protein TorD (199 aa).

It belongs to the TorD/DmsD family. TorD subfamily.

It localises to the cytoplasm. Its function is as follows. Involved in the biogenesis of TorA. Acts on TorA before the insertion of the molybdenum cofactor and, as a result, probably favors a conformation of the apoenzyme that is competent for acquiring the cofactor. The sequence is that of Chaperone protein TorD from Escherichia coli O157:H7 (strain EC4115 / EHEC).